Consider the following 167-residue polypeptide: NAD(P)H-quinone oxidoreductase subunit I, chloroplastic (167 aa).

2 consecutive 4Fe-4S ferredoxin-type domains span residues 55–84 (GRIHFEFDKCIACEVCVRVCPIDLPVVDWK) and 95–124 (LNYSIDFGICIFCGNCVEYCPTNCLSMTEE). [4Fe-4S] cluster is bound by residues Cys-64, Cys-67, Cys-70, Cys-74, Cys-104, Cys-107, Cys-110, and Cys-114.

The protein belongs to the complex I 23 kDa subunit family. NDH is composed of at least 16 different subunits, 5 of which are encoded in the nucleus. Requires [4Fe-4S] cluster as cofactor.

It localises to the plastid. Its subcellular location is the chloroplast thylakoid membrane. It carries out the reaction a plastoquinone + NADH + (n+1) H(+)(in) = a plastoquinol + NAD(+) + n H(+)(out). It catalyses the reaction a plastoquinone + NADPH + (n+1) H(+)(in) = a plastoquinol + NADP(+) + n H(+)(out). NDH shuttles electrons from NAD(P)H:plastoquinone, via FMN and iron-sulfur (Fe-S) centers, to quinones in the photosynthetic chain and possibly in a chloroplast respiratory chain. The immediate electron acceptor for the enzyme in this species is believed to be plastoquinone. Couples the redox reaction to proton translocation, and thus conserves the redox energy in a proton gradient. The sequence is that of NAD(P)H-quinone oxidoreductase subunit I, chloroplastic from Eucalyptus globulus subsp. globulus (Tasmanian blue gum).